A 170-amino-acid chain; its full sequence is Adenine phosphoribosyltransferase (170 aa).

The protein belongs to the purine/pyrimidine phosphoribosyltransferase family. Homodimer.

Its subcellular location is the cytoplasm. It carries out the reaction AMP + diphosphate = 5-phospho-alpha-D-ribose 1-diphosphate + adenine. It functions in the pathway purine metabolism; AMP biosynthesis via salvage pathway; AMP from adenine: step 1/1. Its function is as follows. Catalyzes a salvage reaction resulting in the formation of AMP, that is energically less costly than de novo synthesis. This chain is Adenine phosphoribosyltransferase, found in Streptococcus sanguinis (strain SK36).